The sequence spans 205 residues: Urease accessory protein UreG (205 aa).

Position 11–18 (glycine 11–threonine 18) interacts with GTP.

It belongs to the SIMIBI class G3E GTPase family. UreG subfamily. As to quaternary structure, homodimer. UreD, UreF and UreG form a complex that acts as a GTP-hydrolysis-dependent molecular chaperone, activating the urease apoprotein by helping to assemble the nickel containing metallocenter of UreC. The UreE protein probably delivers the nickel.

The protein localises to the cytoplasm. Functionally, facilitates the functional incorporation of the urease nickel metallocenter. This process requires GTP hydrolysis, probably effectuated by UreG. This Prochlorococcus marinus (strain NATL1A) protein is Urease accessory protein UreG.